Reading from the N-terminus, the 513-residue chain is Abl interactor 2 (513 aa).

Serine 40 is modified (phosphoserine). The t-SNARE coiled-coil homology domain maps to 45-107; the sequence is RALEETKAYT…DIHKEKVARR (63 aa). Positions 167–431 are disordered; it reads KMGGLPRTTP…PPEDYEEEEA (265 aa). Positions 174 to 185 are enriched in pro residues; it reads TTPPTQKPPSPP. Residues serine 183 and serine 227 each carry the phosphoserine modification. Polar residues predominate over residues 217-241; it reads PTRNMAPSQQSPVRTASVNQRNRTY. Positions 242 to 272 are enriched in low complexity; the sequence is SSSGSSGGSHPSSRSSSRENSGSGSVGVPIA. The span at 273 to 282 shows a compositional bias: pro residues; the sequence is VPTPSPPSVF. Positions 283 to 325 are enriched in low complexity; sequence PAPAGSAGTPPLPATSASAPAPLVPATVPSSTAPNAAAGGAPN. Position 361 is a phosphothreonine (threonine 361). Serine 368 carries the phosphoserine modification. Polar residues predominate over residues 376-399; it reads SITSQTSLQNQMNGGPFYSQNPVS. The span at 400–409 shows a compositional bias: pro residues; the sequence is DTPPPPPPVE. The 60-residue stretch at 451–510 folds into the SH3 domain; the sequence is SYLEKVVAIYDYTKDKEDELSFQEGAIIYVIKKNDDGWYEGVMNGVTGLFPGNYVESIMH.

Belongs to the ABI family. As to quaternary structure, component of the WAVE complex composed of ABI2, CYFIP1 or CYFIP2, BRK1, NCKAP1 and WASF1/WAVE1. Within the complex, a heterodimer containing NCKAP1 and CYFIP1 interacts with a heterotrimer formed by WAVE1, ABI2 and BRK1. CYFIP2 binds to activated RAC1 which causes the complex to dissociate, releasing activated WASF1. Interacts (via SH3 domain) with ABL1 and ABL2. In terms of assembly, (Microbial infection) Interacts with human cytomegalovirus UL135. Post-translationally, phosphorylated by ABL1. Widely expressed. Abundant in testes, ovary, thymus, and colon, with lower but detectable levels in prostate, peripheral blood leukocytes, and spleen.

It is found in the cytoplasm. Its subcellular location is the nucleus. The protein localises to the cell projection. It localises to the lamellipodium. The protein resides in the filopodium. It is found in the cytoskeleton. Its subcellular location is the cell junction. The protein localises to the adherens junction. In terms of biological role, regulator of actin cytoskeleton dynamics underlying cell motility and adhesion. Functions as a component of the WAVE complex, which activates actin nucleating machinery Arp2/3 to drive lamellipodia formation. Acts as a regulator and substrate of nonreceptor tyrosine kinases ABL1 and ABL2 involved in processes linked to cell growth and differentiation. Positively regulates ABL1-mediated phosphorylation of ENAH, which is required for proper polymerization of nucleated actin filaments at the leading edge. Contributes to the regulation of actin assembly at the tips of neuron projections. In particular, controls dendritic spine morphogenesis and may promote dendritic spine specification toward large mushroom-type spines known as repositories of memory in the brain. In hippocampal neurons, may mediate actin-dependent BDNF-NTRK2 early endocytic trafficking that triggers dendrite outgrowth. Participates in ocular lens morphogenesis, likely by regulating lamellipodia-driven adherens junction formation at the epithelial cell-secondary lens fiber interface. Also required for nascent adherens junction assembly in epithelial cells. This is Abl interactor 2 from Homo sapiens (Human).